An 872-amino-acid chain; its full sequence is N-acetyltransferase eso1 (872 aa).

The segment at Met1–Arg591 is polymerase type-Y. Residues Val29–Gly285 form the UmuC domain. The segment at Ser533–Lys567 adopts a UBZ3-type zinc-finger fold. Positions 540, 543, 555, and 559 each coordinate Zn(2+). The segment at Arg569 to Ser602 is disordered. Over residues Gln583 to Ser595 the composition is skewed to basic residues. Residues Lys592–Ser872 form an acetyltransferase region. Residues Val653–His677 form a CCHH-type zinc finger.

It in the C-terminal section; belongs to the acetyltransferase family. ECO subfamily. In the N-terminal section; belongs to the DNA polymerase type-Y family. In terms of assembly, interacts with pds5.

The protein localises to the nucleus. Its function is as follows. Probable acetyltransferase required for the establishment of sister chromatid cohesion and couple the processes of cohesion and DNA replication to ensure that only sister chromatids become paired together. In contrast to the structural cohesins, the deposition and establishment factors are required only during S phase. The relevance of acetyltransferase function remains unclear. The sequence is that of N-acetyltransferase eso1 (eso1) from Schizosaccharomyces pombe (strain 972 / ATCC 24843) (Fission yeast).